We begin with the raw amino-acid sequence, 508 residues long: Photosystem II CP47 reaction center protein (508 aa).

The next 6 membrane-spanning stretches (helical) occupy residues 21–36 (SVHI…WAGS), 101–115 (IVFS…IWHW), 140–156 (GIHL…FGAF), 203–218 (IAAG…FHLS), 237–252 (VLSS…AFVV), and 457–472 (SFAL…HGAR).

It belongs to the PsbB/PsbC family. PsbB subfamily. In terms of assembly, PSII is composed of 1 copy each of membrane proteins PsbA, PsbB, PsbC, PsbD, PsbE, PsbF, PsbH, PsbI, PsbJ, PsbK, PsbL, PsbM, PsbT, PsbX, PsbY, PsbZ, Psb30/Ycf12, at least 3 peripheral proteins of the oxygen-evolving complex and a large number of cofactors. It forms dimeric complexes. The cofactor is Binds multiple chlorophylls. PSII binds additional chlorophylls, carotenoids and specific lipids..

It is found in the plastid. The protein resides in the chloroplast thylakoid membrane. In terms of biological role, one of the components of the core complex of photosystem II (PSII). It binds chlorophyll and helps catalyze the primary light-induced photochemical processes of PSII. PSII is a light-driven water:plastoquinone oxidoreductase, using light energy to abstract electrons from H(2)O, generating O(2) and a proton gradient subsequently used for ATP formation. In Nuphar advena (Common spatterdock), this protein is Photosystem II CP47 reaction center protein.